The primary structure comprises 301 residues: Probable alpha-L-glutamate ligase (301 aa).

The 184-residue stretch at 104 to 287 (LQLLSRKGVG…VAALVMEFIE (184 aa)) folds into the ATP-grasp domain. ATP is bound by residues Lys-141, 178-179 (EY), Asp-187, and 211-213 (RSN). The Mg(2+) site is built by Asp-248, Glu-260, and Asn-262. Residues Asp-248, Glu-260, and Asn-262 each contribute to the Mn(2+) site.

It belongs to the RimK family. Requires Mg(2+) as cofactor. Mn(2+) is required as a cofactor.

The sequence is that of Probable alpha-L-glutamate ligase from Saccharophagus degradans (strain 2-40 / ATCC 43961 / DSM 17024).